We begin with the raw amino-acid sequence, 287 residues long: 4-diphosphocytidyl-2-C-methyl-D-erythritol kinase (287 aa).

K12 is a catalytic residue. Residue 95 to 105 participates in ATP binding; it reads PAQAGMGGGSS. D137 is a catalytic residue.

Belongs to the GHMP kinase family. IspE subfamily.

It catalyses the reaction 4-CDP-2-C-methyl-D-erythritol + ATP = 4-CDP-2-C-methyl-D-erythritol 2-phosphate + ADP + H(+). It functions in the pathway isoprenoid biosynthesis; isopentenyl diphosphate biosynthesis via DXP pathway; isopentenyl diphosphate from 1-deoxy-D-xylulose 5-phosphate: step 3/6. Functionally, catalyzes the phosphorylation of the position 2 hydroxy group of 4-diphosphocytidyl-2C-methyl-D-erythritol. This chain is 4-diphosphocytidyl-2-C-methyl-D-erythritol kinase, found in Delftia acidovorans (strain DSM 14801 / SPH-1).